Reading from the N-terminus, the 157-residue chain is 6,7-dimethyl-8-ribityllumazine synthase 1 (157 aa).

Residues F22, 53–55 (ALE), and 82–84 (TVI) each bind 5-amino-6-(D-ribitylamino)uracil. Residue 87–88 (ET) participates in (2S)-2-hydroxy-3-oxobutyl phosphate binding. H90 (proton donor) is an active-site residue. Residue N115 participates in 5-amino-6-(D-ribitylamino)uracil binding. Position 129 (R129) interacts with (2S)-2-hydroxy-3-oxobutyl phosphate.

Belongs to the DMRL synthase family.

It catalyses the reaction (2S)-2-hydroxy-3-oxobutyl phosphate + 5-amino-6-(D-ribitylamino)uracil = 6,7-dimethyl-8-(1-D-ribityl)lumazine + phosphate + 2 H2O + H(+). It participates in cofactor biosynthesis; riboflavin biosynthesis; riboflavin from 2-hydroxy-3-oxobutyl phosphate and 5-amino-6-(D-ribitylamino)uracil: step 1/2. Functionally, catalyzes the formation of 6,7-dimethyl-8-ribityllumazine by condensation of 5-amino-6-(D-ribitylamino)uracil with 3,4-dihydroxy-2-butanone 4-phosphate. This is the penultimate step in the biosynthesis of riboflavin. The polypeptide is 6,7-dimethyl-8-ribityllumazine synthase 1 (Brucella suis biovar 1 (strain 1330)).